Reading from the N-terminus, the 226-residue chain is CASP-like protein 2BC1 (226 aa).

At 1–37 (MRKHIDIVFSRLSGPILNPPPDNNVIPKTDRKLRITE) the chain is on the cytoplasmic side. A helical membrane pass occupies residues 38–58 (VILRFAVVIFALVSAIMVGTA). The Extracellular portion of the chain corresponds to 59-78 (SGTRDLGGGIRIHAHFTLLK). Residues 79–99 (TLPFLVIVDGILAVYSLLQGL) form a helical membrane-spanning segment. Residues 100–114 (RCFLSLYMRHILLNK) lie on the Cytoplasmic side of the membrane. A helical membrane pass occupies residues 115–135 (ALAWTIFCCDQALAYVIFAAA). Over 136–170 (ASTAETAYISEQGLDELQWIKVCMFFRAYCFKSGA) the chain is Extracellular. A helical membrane pass occupies residues 171 to 191 (GMINAFLAALCMVFVSGMSVF). Residues 192–226 (HLFRLYGEKRAYGHIAEQVVISEEAAERRNSLNGI) are Cytoplasmic-facing.

It belongs to the Casparian strip membrane proteins (CASP) family. Homodimer and heterodimers.

It is found in the cell membrane. The protein is CASP-like protein 2BC1 of Picea sitchensis (Sitka spruce).